Reading from the N-terminus, the 284-residue chain is Probable endonuclease 4 (284 aa).

Zn(2+) contacts are provided by H69, H109, E145, D179, H182, H216, D229, H231, and E261.

Belongs to the AP endonuclease 2 family. Zn(2+) serves as cofactor.

The catalysed reaction is Endonucleolytic cleavage to 5'-phosphooligonucleotide end-products.. In terms of biological role, endonuclease IV plays a role in DNA repair. It cleaves phosphodiester bonds at apurinic or apyrimidinic (AP) sites, generating a 3'-hydroxyl group and a 5'-terminal sugar phosphate. The sequence is that of Probable endonuclease 4 from Klebsiella pneumoniae subsp. pneumoniae (strain ATCC 700721 / MGH 78578).